The sequence spans 297 residues: Homoserine kinase (297 aa).

84 to 94 (PPARGLGSSAT) contributes to the ATP binding site.

It belongs to the GHMP kinase family. Homoserine kinase subfamily.

Its subcellular location is the cytoplasm. It carries out the reaction L-homoserine + ATP = O-phospho-L-homoserine + ADP + H(+). Its pathway is amino-acid biosynthesis; L-threonine biosynthesis; L-threonine from L-aspartate: step 4/5. Catalyzes the ATP-dependent phosphorylation of L-homoserine to L-homoserine phosphate. This chain is Homoserine kinase (thrB), found in Aquifex aeolicus (strain VF5).